The chain runs to 344 residues: MSRSGAMDLASGLGGKITKDEVKSAVDEYEKYHGYYGGKEEARKSNYTDMVNKYYDLATSFYEYGWGESFHFAHRWNGESLRESIKRHEHFLALQLGVKPGMKVLDVGCGIGGPLREIAKFSLASVTGLNNNEYQITRGKELNRVAGVSGTCDFVKADFMKMPFSDNTFDAVYAIEATCHAPDPVGCYKEIYRVLKPGQCFAVYEWCITDHYEPNNATHKRIKDEIELGNGLPDIRSTQQCLQAAKDAGFEVIWDKDLAEDSPVPWYLPLDPSRFSLSSFRLTTVGRAITRTMVKALEYVGLAPQGSERVSNFLEKAAEGLVEGGKKEIFTPMYFFLVRKPISE.

This sequence belongs to the class I-like SAM-binding methyltransferase superfamily. Erg6/SMT family.

The enzyme catalyses zymosterol + S-adenosyl-L-methionine = fecosterol + S-adenosyl-L-homocysteine + H(+). The protein operates within steroid biosynthesis; sterol biosynthesis. Catalyzes the methyl transfer from S-adenosyl-methionine to the C-24 of cycloartenol to form 24-methylene cycloartenol. This chain is Cycloartenol-C-24-methyltransferase 1 (Smt1-1), found in Oryza sativa subsp. japonica (Rice).